Consider the following 208-residue polypeptide: Imidazoleglycerol-phosphate dehydratase (208 aa).

The tract at residues 1–22 (MTRRAAVKAPRAGAAARRGSVA) is disordered. A compositionally biased stretch (low complexity) spans 7-19 (VKAPRAGAAARRG).

It belongs to the imidazoleglycerol-phosphate dehydratase family.

The protein localises to the cytoplasm. It carries out the reaction D-erythro-1-(imidazol-4-yl)glycerol 3-phosphate = 3-(imidazol-4-yl)-2-oxopropyl phosphate + H2O. The protein operates within amino-acid biosynthesis; L-histidine biosynthesis; L-histidine from 5-phospho-alpha-D-ribose 1-diphosphate: step 6/9. The protein is Imidazoleglycerol-phosphate dehydratase of Anaeromyxobacter dehalogenans (strain 2CP-C).